The primary structure comprises 369 residues: Sulfate permease 2, chloroplastic (369 aa).

Residues 1-21 (MASTTLLQPALGLPSRVGPRS) are disordered. A chloroplast-targeting transit peptide spans 1-82 (MASTTLLQPA…QQSRGDLLVS (82 aa)). 5 helical membrane passes run 110–130 (VGVA…NVFV), 156–176 (TLML…VAAI), 187–207 (VFLM…TGLM), 229–249 (VVFA…PFVV), and 335–355 (TEAA…TLWI). An ABC transmembrane type-1 domain is found at 153–356 (LKMTLMLAFV…ALALGTLWIK (204 aa)).

The protein belongs to the ATP-binding cassette (ABC) (TC 3.A.1) superfamily. Part of the chloroplast sulfate permease holocomplex. May form a heterodimer with SLUP1.

It is found in the plastid. The protein localises to the chloroplast membrane. In terms of biological role, part of the ABC-type chloroplast envelope-localized sulfate transporter. This is Sulfate permease 2, chloroplastic (SULP2) from Chlamydomonas reinhardtii (Chlamydomonas smithii).